The following is a 388-amino-acid chain: Succinate--CoA ligase [ADP-forming] subunit beta (388 aa).

Residues lysine 9–histidine 244 enclose the ATP-grasp domain. Residues lysine 46, glycine 53–glycine 55, glutamate 99, threonine 102, and glutamate 107 each bind ATP. Positions 199 and 213 each coordinate Mg(2+). Residues asparagine 264 and glycine 321 to valine 323 contribute to the substrate site.

The protein belongs to the succinate/malate CoA ligase beta subunit family. As to quaternary structure, heterotetramer of two alpha and two beta subunits. Requires Mg(2+) as cofactor.

The catalysed reaction is succinate + ATP + CoA = succinyl-CoA + ADP + phosphate. The enzyme catalyses GTP + succinate + CoA = succinyl-CoA + GDP + phosphate. It functions in the pathway carbohydrate metabolism; tricarboxylic acid cycle; succinate from succinyl-CoA (ligase route): step 1/1. Succinyl-CoA synthetase functions in the citric acid cycle (TCA), coupling the hydrolysis of succinyl-CoA to the synthesis of either ATP or GTP and thus represents the only step of substrate-level phosphorylation in the TCA. The beta subunit provides nucleotide specificity of the enzyme and binds the substrate succinate, while the binding sites for coenzyme A and phosphate are found in the alpha subunit. The protein is Succinate--CoA ligase [ADP-forming] subunit beta of Shewanella sp. (strain MR-4).